The primary structure comprises 308 residues: 4-hydroxy-3-methylbut-2-enyl diphosphate reductase (308 aa).

Cys12 is a binding site for [4Fe-4S] cluster. The (2E)-4-hydroxy-3-methylbut-2-enyl diphosphate site is built by His43 and His77. His43 and His77 together coordinate dimethylallyl diphosphate. The isopentenyl diphosphate site is built by His43 and His77. Cys99 lines the [4Fe-4S] cluster pocket. His127 contributes to the (2E)-4-hydroxy-3-methylbut-2-enyl diphosphate binding site. His127 lines the dimethylallyl diphosphate pocket. Isopentenyl diphosphate is bound at residue His127. The Proton donor role is filled by Glu129. Thr167 is a binding site for (2E)-4-hydroxy-3-methylbut-2-enyl diphosphate. Cys197 contacts [4Fe-4S] cluster. The (2E)-4-hydroxy-3-methylbut-2-enyl diphosphate site is built by Ser225, Ser226, Asn227, and Ser269. Dimethylallyl diphosphate-binding residues include Ser225, Ser226, Asn227, and Ser269. Isopentenyl diphosphate contacts are provided by Ser225, Ser226, Asn227, and Ser269.

The protein belongs to the IspH family. Requires [4Fe-4S] cluster as cofactor.

The enzyme catalyses isopentenyl diphosphate + 2 oxidized [2Fe-2S]-[ferredoxin] + H2O = (2E)-4-hydroxy-3-methylbut-2-enyl diphosphate + 2 reduced [2Fe-2S]-[ferredoxin] + 2 H(+). It carries out the reaction dimethylallyl diphosphate + 2 oxidized [2Fe-2S]-[ferredoxin] + H2O = (2E)-4-hydroxy-3-methylbut-2-enyl diphosphate + 2 reduced [2Fe-2S]-[ferredoxin] + 2 H(+). It functions in the pathway isoprenoid biosynthesis; dimethylallyl diphosphate biosynthesis; dimethylallyl diphosphate from (2E)-4-hydroxy-3-methylbutenyl diphosphate: step 1/1. It participates in isoprenoid biosynthesis; isopentenyl diphosphate biosynthesis via DXP pathway; isopentenyl diphosphate from 1-deoxy-D-xylulose 5-phosphate: step 6/6. Catalyzes the conversion of 1-hydroxy-2-methyl-2-(E)-butenyl 4-diphosphate (HMBPP) into a mixture of isopentenyl diphosphate (IPP) and dimethylallyl diphosphate (DMAPP). Acts in the terminal step of the DOXP/MEP pathway for isoprenoid precursor biosynthesis. This is 4-hydroxy-3-methylbut-2-enyl diphosphate reductase from Wolbachia pipientis subsp. Culex pipiens (strain wPip).